The primary structure comprises 360 residues: Membrane-bound lytic murein transglycosylase C (360 aa).

The signal sequence occupies residues 1 to 16 (MKKYLALALIAPLLVS). The N-palmitoyl cysteine moiety is linked to residue Cys17. Cys17 carries S-diacylglycerol cysteine lipidation.

The protein belongs to the transglycosylase Slt family.

Its subcellular location is the cell outer membrane. It catalyses the reaction Exolytic cleavage of the (1-&gt;4)-beta-glycosidic linkage between N-acetylmuramic acid (MurNAc) and N-acetylglucosamine (GlcNAc) residues in peptidoglycan, from either the reducing or the non-reducing ends of the peptidoglycan chains, with concomitant formation of a 1,6-anhydrobond in the MurNAc residue.. In terms of biological role, murein-degrading enzyme. May play a role in recycling of muropeptides during cell elongation and/or cell division. This chain is Membrane-bound lytic murein transglycosylase C, found in Klebsiella pneumoniae subsp. pneumoniae (strain ATCC 700721 / MGH 78578).